The chain runs to 1051 residues: Eukaryotic translation initiation factor 3 subunit A (1051 aa).

Residues 92 to 121 adopt a coiled-coil conformation; it reads LKKFIELAEKKVTEAQAKADEIQSSLESAA. Residues 339–523 form the PCI domain; that stretch reads MTKAASFVLL…GVLTFDTDIF (185 aa). Residues 608 to 905 are a coiled coil; sequence RVLIEKKKEA…EAEARRAARK (298 aa). Basic and acidic residues-rich tracts occupy residues 617 to 632, 642 to 664, 794 to 901, and 916 to 926; these read AATD…EETR, EAEK…RDEQ, KEVS…EARR, and AELERPVERTA. 2 disordered regions span residues 617-664 and 794-1051; these read AATD…RDEQ and KEVS…QQQQ. 2 stretches are compositionally biased toward low complexity: residues 948–961 and 1010–1039; these read KEAA…AAAE and SSSS…SPAP.

This sequence belongs to the eIF-3 subunit A family. Component of the eukaryotic translation initiation factor 3 (eIF-3) complex.

The protein localises to the cytoplasm. Its function is as follows. RNA-binding component of the eukaryotic translation initiation factor 3 (eIF-3) complex, which is involved in protein synthesis of a specialized repertoire of mRNAs and, together with other initiation factors, stimulates binding of mRNA and methionyl-tRNAi to the 40S ribosome. The eIF-3 complex specifically targets and initiates translation of a subset of mRNAs involved in cell proliferation. This Aspergillus fumigatus (strain CBS 144.89 / FGSC A1163 / CEA10) (Neosartorya fumigata) protein is Eukaryotic translation initiation factor 3 subunit A (tif32).